Here is a 151-residue protein sequence, read N- to C-terminus: Mini-ribonuclease 3 (151 aa).

The active site involves aspartate 28.

It belongs to the MrnC RNase family. In terms of assembly, homodimer. Requires Mg(2+) as cofactor.

The protein resides in the cytoplasm. In terms of biological role, involved in correct processing of both the 5' and 3' ends of 23S rRNA precursor. Processes 30S rRNA precursor transcript even in absence of ribonuclease 3 (Rnc); Rnc processes 30S rRNA into smaller rRNA precursors. This is Mini-ribonuclease 3 from Clostridium tetani (strain Massachusetts / E88).